Consider the following 115-residue polypeptide: U3-lycotoxin-Ls1q (115 aa).

The signal sequence occupies residues 1–20 (MKFVLLFGVLLVTLFSYSSA). A propeptide spanning residues 21–44 (EMFDDFDQADEDELLSLIEKEEAR) is cleaved from the precursor. 4 disulfide bridges follow: C48-C63, C55-C72, C62-C87, and C74-C85.

It belongs to the neurotoxin 19 (CSTX) family. 01 subfamily. As to expression, expressed by the venom gland.

It is found in the secreted. This is U3-lycotoxin-Ls1q from Lycosa singoriensis (Wolf spider).